A 406-amino-acid chain; its full sequence is Cytochrome P450 165C4 (406 aa).

Cys356 is a binding site for heme.

This sequence belongs to the cytochrome P450 family. It depends on heme as a cofactor.

The protein operates within antibiotic biosynthesis; vancomycin biosynthesis. Its function is as follows. Involved in the coupling of aromatic side chains of the heptapeptide of vancomycin. The polypeptide is Cytochrome P450 165C4 (cyp165C4) (Amycolatopsis orientalis (Nocardia orientalis)).